A 297-amino-acid polypeptide reads, in one-letter code: Glycerol-3-phosphate dehydrogenase [NAD(P)+] (297 aa).

The NADPH site is built by W11, R33, and K79. Positions 79, 107, and 109 each coordinate sn-glycerol 3-phosphate. A111 is a binding site for NADPH. Sn-glycerol 3-phosphate contacts are provided by K161, D214, S224, R225, and N226. K161 serves as the catalytic Proton acceptor. Residue R225 coordinates NADPH. NADPH is bound by residues V249 and E251.

This sequence belongs to the NAD-dependent glycerol-3-phosphate dehydrogenase family.

The protein localises to the cytoplasm. It carries out the reaction sn-glycerol 3-phosphate + NAD(+) = dihydroxyacetone phosphate + NADH + H(+). It catalyses the reaction sn-glycerol 3-phosphate + NADP(+) = dihydroxyacetone phosphate + NADPH + H(+). The protein operates within membrane lipid metabolism; glycerophospholipid metabolism. Functionally, catalyzes the reduction of the glycolytic intermediate dihydroxyacetone phosphate (DHAP) to sn-glycerol 3-phosphate (G3P), the key precursor for phospholipid synthesis. This is Glycerol-3-phosphate dehydrogenase [NAD(P)+] from Campylobacter jejuni subsp. jejuni serotype O:6 (strain 81116 / NCTC 11828).